Consider the following 360-residue polypeptide: uncharacterized protein (360 aa).

The tract at residues 193-245 is disordered; the sequence is SRHTRPKGQPLSSPKKNSGSAARPSTAIGLCRRSQTPGALQSTGPSNTELEPE. Polar residues-rich tracts occupy residues 202-212 and 225-241; these read PLSSPKKNSGS and RSQT…SNTE.

This is an uncharacterized protein from Homo sapiens (Human).